The primary structure comprises 304 residues: MGIYENNIIDGKAAAADLLGRLKVVMEGLKEEHGLFPSLVVIIVGDDPASRLYVGNKQRKAEELGINSKTIALPYETTQEELLGIIQELNEDENVHGILVQLPLPKHIDKILIINAIDPEKDVDGFHNANAGKLLTGEMDCMVPCTPQGCIYLIKKVMPVLSSKRAVVIGRSNIVGKPVALLLMYENCTVSILHSATANIEEHCRDAEIIIAAVGKARMVKSEWVSPGAVVIDVGINLITSESKNRFVGDVDFESVRDKVAAITPVPGGVGPMTIAFLLVNTVLGACRQKGIKQYKNIKSSVLQ.

NADP(+)-binding positions include 170–172, serine 195, and isoleucine 236; that span reads GRS.

It belongs to the tetrahydrofolate dehydrogenase/cyclohydrolase family. In terms of assembly, homodimer.

It catalyses the reaction (6R)-5,10-methylene-5,6,7,8-tetrahydrofolate + NADP(+) = (6R)-5,10-methenyltetrahydrofolate + NADPH. It carries out the reaction (6R)-5,10-methenyltetrahydrofolate + H2O = (6R)-10-formyltetrahydrofolate + H(+). The protein operates within one-carbon metabolism; tetrahydrofolate interconversion. Its function is as follows. Catalyzes the oxidation of 5,10-methylenetetrahydrofolate to 5,10-methenyltetrahydrofolate and then the hydrolysis of 5,10-methenyltetrahydrofolate to 10-formyltetrahydrofolate. This chain is Bifunctional protein FolD, found in Anaplasma phagocytophilum (strain HZ).